The sequence spans 329 residues: DNA-directed RNA polymerase subunit alpha (329 aa).

The segment at 1 to 235 (MQGFVEDFLK…QQLEAFVDLR (235 aa)) is alpha N-terminal domain (alpha-NTD). The alpha C-terminal domain (alpha-CTD) stretch occupies residues 249 to 329 (FEPVLLRPVD…NWPPKSLLED (81 aa)).

This sequence belongs to the RNA polymerase alpha chain family. As to quaternary structure, homodimer. The RNAP catalytic core consists of 2 alpha, 1 beta, 1 beta' and 1 omega subunit. When a sigma factor is associated with the core the holoenzyme is formed, which can initiate transcription.

The enzyme catalyses RNA(n) + a ribonucleoside 5'-triphosphate = RNA(n+1) + diphosphate. In terms of biological role, DNA-dependent RNA polymerase catalyzes the transcription of DNA into RNA using the four ribonucleoside triphosphates as substrates. This Buchnera aphidicola subsp. Cinara cedri (strain Cc) protein is DNA-directed RNA polymerase subunit alpha.